A 306-amino-acid chain; its full sequence is MRKRARIIYNPTSGKELFKRMLPEVLVKMEKAGFETSAYATQKAGDATIESKRALQEDYEMLIVAGGDGTLNEVVNGIAEHPKRPKIGVIPMGTVNDFGRALHLPTDILKAVDVIIEGHSVKVDIGKMNSRYFINLAAGGRITEVSYETSSKLKTFVGPFAYYIKGMEMLPQMTNVDVRIEYDGQVFQGEILLFLLGLTNSMAGFEKLVPDARLDDGYFTLIIVQKANLAELGHIMTLASRGEHIKHPKVIYEKAKSVNISSFEQMPLNVDGEYGGQLPANFLNLKQHIEVYTPKDVKNTELIQQD.

Positions 1–132 constitute a DAGKc domain; sequence MRKRARIIYN…VDIGKMNSRY (132 aa). Residues 10-14, Thr41, 67-73, and Thr94 contribute to the ATP site; these read NPTSG and GDGTLNE. Positions 213, 216, and 218 each coordinate Mg(2+). Glu273 acts as the Proton acceptor in catalysis.

Belongs to the diacylglycerol/lipid kinase family. As to quaternary structure, homodimer. The cofactor is Mg(2+).

The enzyme catalyses a 1,2-diacyl-sn-glycerol + ATP = a 1,2-diacyl-sn-glycero-3-phosphate + ADP + H(+). Functionally, catalyzes the phosphorylation of diacylglycerol (DAG) into phosphatidic acid. Is a key enzyme involved in the production of lipoteichoic acid by reintroducing DAG formed from the breakdown of membrane phospholipids into the phosphatidylglycerol biosynthetic pathway. This is Diacylglycerol kinase (dagK) from Staphylococcus carnosus (strain TM300).